The chain runs to 485 residues: UDP-N-acetylmuramate--L-alanine ligase (485 aa).

Residue 120-126 (GSHGKTT) participates in ATP binding.

This sequence belongs to the MurCDEF family.

It localises to the cytoplasm. The catalysed reaction is UDP-N-acetyl-alpha-D-muramate + L-alanine + ATP = UDP-N-acetyl-alpha-D-muramoyl-L-alanine + ADP + phosphate + H(+). Its pathway is cell wall biogenesis; peptidoglycan biosynthesis. Functionally, cell wall formation. This Rickettsia africae (strain ESF-5) protein is UDP-N-acetylmuramate--L-alanine ligase.